Reading from the N-terminus, the 471-residue chain is Probable pyruvate, phosphate dikinase regulatory protein, chloroplastic (471 aa).

A chloroplast-targeting transit peptide spans 1–49 (MSSSSSTSPRFGSMISAKLASPPPSLLLPPSPRLQGRRLTPPSCTPGTP). Residues 1-133 (MSSSSSTSPR…PHPSSDEAAS (133 aa)) are disordered. Residues 21 to 32 (SPPPSLLLPPSP) show a composition bias toward pro residues. The span at 71 to 88 (GSATTPRSPAQLGSSQLH) shows a compositional bias: polar residues. Basic residues predominate over residues 89 to 99 (RWSRARAHRSG). The segment covering 100–111 (RRLEWPTIRDRG) has biased composition (basic and acidic residues). 171–178 (HSVNAALG) lines the ADP pocket.

Belongs to the pyruvate, phosphate/water dikinase regulatory protein family. PDRP subfamily.

The protein localises to the plastid. It is found in the chloroplast. The catalysed reaction is N(tele)-phospho-L-histidyl/L-threonyl-[pyruvate, phosphate dikinase] + ADP = N(tele)-phospho-L-histidyl/O-phospho-L-threonyl-[pyruvate, phosphate dikinase] + AMP + H(+). It carries out the reaction N(tele)-phospho-L-histidyl/O-phospho-L-threonyl-[pyruvate, phosphate dikinase] + phosphate + H(+) = N(tele)-phospho-L-histidyl/L-threonyl-[pyruvate, phosphate dikinase] + diphosphate. Regulated by light/dark exposure. Functionally, bifunctional serine/threonine kinase and phosphorylase involved in the dark/light-mediated regulation of PPDK by catalyzing its phosphorylation/dephosphorylation. Dark/light-induced changes in stromal concentrations of the competing ADP and Pi substrates govern the direction of the reaction. In the dark, phosphorylates the catalytic intermediate of PPDK (PPDK-HisP), inactivating it. Light exposure induces the phosphorolysis reaction that reactivates PPDK. In Oryza sativa subsp. indica (Rice), this protein is Probable pyruvate, phosphate dikinase regulatory protein, chloroplastic (PDRP1).